Here is a 330-residue protein sequence, read N- to C-terminus: Beta-ketoacyl-[acyl-carrier-protein] synthase III (330 aa).

Residues Cys115 and His255 contribute to the active site. An ACP-binding region spans residues 256 to 260 (QANFR). Residue Asn285 is part of the active site.

This sequence belongs to the thiolase-like superfamily. FabH family. Homodimer.

Its subcellular location is the cytoplasm. It carries out the reaction malonyl-[ACP] + acetyl-CoA + H(+) = 3-oxobutanoyl-[ACP] + CO2 + CoA. Its pathway is lipid metabolism; fatty acid biosynthesis. Its function is as follows. Catalyzes the condensation reaction of fatty acid synthesis by the addition to an acyl acceptor of two carbons from malonyl-ACP. Catalyzes the first condensation reaction which initiates fatty acid synthesis and may therefore play a role in governing the total rate of fatty acid production. Possesses both acetoacetyl-ACP synthase and acetyl transacylase activities. Its substrate specificity determines the biosynthesis of branched-chain and/or straight-chain of fatty acids. This chain is Beta-ketoacyl-[acyl-carrier-protein] synthase III, found in Helicobacter pylori (strain HPAG1).